Reading from the N-terminus, the 274-residue chain is Mitochondrial outer membrane protein porin 3 (274 aa).

Ser-76 is modified (phosphoserine).

This sequence belongs to the eukaryotic mitochondrial porin (TC 1.B.8.1) family. In terms of assembly, interacts with KIN14F/KP1. Interacts with FBA6 and GAPC1. Expressed in leaf tips, anthers and stigma.

It localises to the cell membrane. Its subcellular location is the mitochondrion outer membrane. In terms of biological role, forms a channel through the mitochondrial outer membrane that allows diffusion of small hydrophilic molecules. The channel adopts an open conformation at low or zero membrane potential and a closed conformation at potentials above 30-40 mV. The open state has a weak anion selectivity whereas the closed state is cation-selective. This Arabidopsis thaliana (Mouse-ear cress) protein is Mitochondrial outer membrane protein porin 3 (VDAC3).